The sequence spans 383 residues: MSRRNWVNFFSRGQGFDLTNDLERGYESALLIQNLELEFYGDRLVRSDVELGVPKSVQASILRRFRAALLICRTTLESVERNRGQFDLQELRQLQLIEAVVSRYGYQLPSGGSPAISRAPEALPRSLLGFFDTVRRQLDPASEETVVAGFRRRRNSTLISLRILLLLILVPLLIQQVAGAYIISPAVDRLSPELPFLSYPKPKLEEQAVEKLRVYKQELEFDALLNSDQPLEADQLRQKLAEKAIELKDEADGLSVQAVKNVFSDLSALIAFTVVCFASRDDLRVMRGFFDEAVYGLSDSAKAFAIILFTDIFVGFHSPEGWTVLLNGIAKHLGLPSQENFVMLFIATFPVILATIFKYWIFRYLNRVSPSSVATLKGMNGSG.

Transmembrane regions (helical) follow at residues 163-183 (ILLLLILVPLLIQQVAGAYII), 258-278 (AVKNVFSDLSALIAFTVVCFA), 306-326 (IILFTDIFVGFHSPEGWTVLL), and 341-361 (FVMLFIATFPVILATIFKYWI).

Belongs to the CemA family.

Its subcellular location is the cell inner membrane. Its function is as follows. Required for H(+) efflux immediately after light irradiation to form a rapid H(+) concentration gradient across the thylakoid membranes. Together with PxcL, contributes to transient H(+) uptake following dark to light transition. This is Proton extrusion protein PxcA from Synechococcus sp. (strain CC9902).